Here is a 626-residue protein sequence, read N- to C-terminus: Leucine-rich repeat and fibronectin type-III domain-containing protein 3 (626 aa).

An N-terminal signal peptide occupies residues 1–16; the sequence is MAVLPLLLCLLPLAPA. The Extracellular portion of the chain corresponds to 17-539; it reads SSPPQPATSS…PHAPFLGGTM (523 aa). The 41-residue stretch at 19–59 folds into the LRRNT domain; that stretch reads PPQPATSSPCPRRCRCQTQSLPLSVLCPGAGLLFVPPSLDR. 6 LRR repeats span residues 84-105, 108-129, 132-153, 157-178, 181-202, and 205-226; these read GLLH…AFAD, ALRA…QLRG, NLRH…ALDD, TLED…ALGR, NVNT…AFSR, and KLAR…PLFS. Positions 249–295 constitute an LRRCT domain; sequence NPLHCNCELVWLRRLAREDDLEACASPPALGGRYFWAVGEEEFVCEP. An Ig-like domain is found at 295–382; that stretch reads PPVVTHRSPP…GEATAAVELT (88 aa). The Fibronectin type-III 1 domain occupies 308–395; sequence PAGRPAALRC…PPPPQLANST (88 aa). Cys-317 and Cys-366 form a disulfide bridge. N-linked (GlcNAc...) asparagine glycans are attached at residues Asn-339, Asn-348, and Asn-393. Residues 382–423 are disordered; sequence TVGPPPPPQLANSTSCDPPRDGEPDALTPPSAASASAKVADT. Positions 406 to 423 are enriched in low complexity; the sequence is DALTPPSAASASAKVADT. The 99-residue stretch at 425 to 523 folds into the Fibronectin type-III 2 domain; it reads APTDRGVQVT…GCARFSTEPA (99 aa). A helical membrane pass occupies residues 540-560; that stretch reads IIALGGVIVASVLVFIFVLLL. Residues 561-626 are Cytoplasmic-facing; sequence RYKVHGVQPP…WGPSHEPAGP (66 aa).

Belongs to the LRFN family. Can form heteromeric complexes with LRFN1, LRFN2, LRFN4 and LRFN5. Able to form homomeric complexes across cell junctions, between adjacent cells. Does not interact with DLG4. N-glycosylated. Expressed in brain. Within brain, expressed in hippocampus, cerebellum, olfactory bulb and forebrain (at protein level).

It localises to the cell membrane. Its subcellular location is the cell projection. The protein resides in the axon. It is found in the dendrite. The protein localises to the synapse. It localises to the presynaptic cell membrane. Its subcellular location is the postsynaptic cell membrane. In terms of biological role, cell adhesion molecule that mediates homophilic cell-cell adhesion in a Ca(2+)-independent manner. Promotes neurite outgrowth in hippocampal neurons. The chain is Leucine-rich repeat and fibronectin type-III domain-containing protein 3 from Rattus norvegicus (Rat).